The following is a 337-amino-acid chain: Ketol-acid reductoisomerase (NAD(P)(+)) (337 aa).

The KARI N-terminal Rossmann domain maps to 2–187; the sequence is ARMFYDADAN…GCTRAGVIET (186 aa). NADP(+) is bound by residues 25 to 28, arginine 48, and 88 to 91; these read FGSQ and DEVQ. The active site involves histidine 113. Residue glycine 139 coordinates NADP(+). One can recognise a KARI C-terminal knotted domain in the interval 188–333; that stretch reads SFQEETETDL…AELRGMMPWL (146 aa). Mg(2+) is bound by residues aspartate 196, glutamate 200, glutamate 232, and glutamate 236. Residue serine 257 coordinates substrate.

The protein belongs to the ketol-acid reductoisomerase family. Mg(2+) serves as cofactor.

The enzyme catalyses (2R)-2,3-dihydroxy-3-methylbutanoate + NAD(+) = (2S)-2-acetolactate + NADH + H(+). The catalysed reaction is (2R)-2,3-dihydroxy-3-methylbutanoate + NADP(+) = (2S)-2-acetolactate + NADPH + H(+). It participates in amino-acid biosynthesis; L-isoleucine biosynthesis; L-isoleucine from 2-oxobutanoate: step 2/4. It functions in the pathway amino-acid biosynthesis; L-valine biosynthesis; L-valine from pyruvate: step 2/4. Functionally, involved in the biosynthesis of branched-chain amino acids (BCAA). Catalyzes an alkyl-migration followed by a ketol-acid reduction of (S)-2-acetolactate (S2AL) to yield (R)-2,3-dihydroxy-isovalerate. In the isomerase reaction, S2AL is rearranged via a Mg-dependent methyl migration to produce 3-hydroxy-3-methyl-2-ketobutyrate (HMKB). In the reductase reaction, this 2-ketoacid undergoes a metal-dependent reduction by NADPH or NADH to yield (R)-2,3-dihydroxy-isovalerate. The polypeptide is Ketol-acid reductoisomerase (NAD(P)(+)) (Syntrophomonas wolfei subsp. wolfei (strain DSM 2245B / Goettingen)).